The sequence spans 483 residues: Cysteine--tRNA ligase (483 aa).

Cys-27 is a binding site for Zn(2+). The 'HIGH' region motif lies at 29–39; the sequence is ITAYDYCHIGH. Zn(2+) is bound by residues Cys-208, His-231, and Glu-235. Positions 263–267 match the 'KMSKS' region motif; that stretch reads KMSKS. Lys-266 is a binding site for ATP.

It belongs to the class-I aminoacyl-tRNA synthetase family. Monomer. Zn(2+) serves as cofactor.

It localises to the cytoplasm. It carries out the reaction tRNA(Cys) + L-cysteine + ATP = L-cysteinyl-tRNA(Cys) + AMP + diphosphate. This Desulfovibrio desulfuricans (strain ATCC 27774 / DSM 6949 / MB) protein is Cysteine--tRNA ligase.